We begin with the raw amino-acid sequence, 504 residues long: NADH-quinone oxidoreductase subunit N (504 aa).

A run of 14 helical transmembrane segments spans residues 9–29 (IALL…LSII), 38–58 (AVLT…HMMW), 78–98 (VLYV…GYVW), 114–134 (LLIA…IVLF), 135–155 (LGIE…VFSK), 164–184 (YIIL…FIYC), 216–236 (IVIG…CVPF), 254–274 (YLAT…LLIL), 282–302 (LHIF…LMAI), 309–329 (RMLA…LIAL), 341–361 (ISVY…IVNI), 392–412 (VIFV…GFIG), 425–447 (LWFL…LKII), and 476–496 (FMVI…QFIV).

This sequence belongs to the complex I subunit 2 family. As to quaternary structure, NDH-1 is composed of 13 different subunits. Subunits NuoA, H, J, K, L, M, N constitute the membrane sector of the complex.

The protein localises to the cell inner membrane. It carries out the reaction a quinone + NADH + 5 H(+)(in) = a quinol + NAD(+) + 4 H(+)(out). Its function is as follows. NDH-1 shuttles electrons from NADH, via FMN and iron-sulfur (Fe-S) centers, to quinones in the respiratory chain. The immediate electron acceptor for the enzyme in this species is believed to be ubiquinone. Couples the redox reaction to proton translocation (for every two electrons transferred, four hydrogen ions are translocated across the cytoplasmic membrane), and thus conserves the redox energy in a proton gradient. This chain is NADH-quinone oxidoreductase subunit N, found in Blochmanniella floridana.